Consider the following 373-residue polypeptide: tRNA-specific 2-thiouridylase MnmA (373 aa).

ATP-binding positions include 12–19 and methionine 38; that span reads GMSGGVDS. The tract at residues 98–100 is interaction with target base in tRNA; sequence NPD. Cysteine 103 functions as the Nucleophile in the catalytic mechanism. Cysteine 103 and cysteine 200 are oxidised to a cystine. An ATP-binding site is contributed by glycine 127. An interaction with tRNA region spans residues 150-152; that stretch reads KDQ. The active-site Cysteine persulfide intermediate is the cysteine 200. The tract at residues 312-313 is interaction with tRNA; the sequence is RY.

It belongs to the MnmA/TRMU family.

It localises to the cytoplasm. It catalyses the reaction S-sulfanyl-L-cysteinyl-[protein] + uridine(34) in tRNA + AH2 + ATP = 2-thiouridine(34) in tRNA + L-cysteinyl-[protein] + A + AMP + diphosphate + H(+). Catalyzes the 2-thiolation of uridine at the wobble position (U34) of tRNA, leading to the formation of s(2)U34. In Streptococcus thermophilus (strain ATCC BAA-491 / LMD-9), this protein is tRNA-specific 2-thiouridylase MnmA.